Reading from the N-terminus, the 563-residue chain is L-lactate permease (563 aa).

Helical transmembrane passes span 14 to 34, 37 to 57, 73 to 93, 131 to 151, 157 to 177, 194 to 214, 220 to 240, 249 to 269, 304 to 324, 381 to 401, 419 to 439, 448 to 468, 506 to 526, and 542 to 562; these read LLLSALAALVPIIFFFWALAI, MKGYTAGLATLGIALIIAVLV, AVYGLLPIGWIIVTSVFLYKI, GAAGFGAPVAISAALLVGLGF, AGICLIANTAPVAFGAIGIPI, MVGRQLPFLSVFIPLYLIIIM, ALEIWPAILVSGVSFAVVQYL, LPDVLSALVSMAALAVFLKWW, IFKAWSPFLLLTAMISVWGIP, LGSAGTAILIAAVLSKFITAI, LPILTIASVVGFAYVTNSSGM, ALTGSMFTFFSPVLGWLGVFI, VTGKMISPQSIAVACAAVGLA, and FLLLLVCIITFLQHHVFSWMI.

It belongs to the lactate permease family.

It localises to the cell membrane. Is the principal permease for the uptake of L-lactate in B.subtilis. The chain is L-lactate permease (lutP) from Bacillus subtilis (strain 168).